The chain runs to 156 residues: Hexachlorocyclohexane dehydrochlorinase 2 (156 aa).

Residue Asp-25 is part of the active site. Residue His-73 is the Proton acceptor of the active site.

It belongs to the HCH dehydrochlorinase family. In terms of assembly, homotrimer.

The protein localises to the periplasm. It carries out the reaction gamma-hexachlorocyclohexane = (3R,4S,5S,6R)-pentachlorocyclohexene + chloride + H(+). It catalyses the reaction (3R,4S,5S,6R)-pentachlorocyclohexene = (3R,6R)-1,3,4,6-tetrachlorocyclohexa-1,4-diene + chloride + H(+). Its pathway is xenobiotic degradation; hexachlorocyclohexane degradation. In terms of biological role, catalyzes the conversion of the important environmental pollutant gamma-hexachlorocyclohexane (gamma-HCH or lindane) to 1,3,4,6-tetrachloro-1,4-cyclohexadiene (1,4-TCDN) via gamma-pentachlorocyclohexene (gamma-PCCH). Proceeds by two successive 1,2-anti conformationally dependent dehydrochlorinations. Also shows activity with alpha- and delta-HCH, giving alpha- and delta-PCCH respectively, but not with the beta isomer. In Sphingobium indicum (strain DSM 16412 / CCM 7286 / MTCC 6364 / B90A), this protein is Hexachlorocyclohexane dehydrochlorinase 2.